A 322-amino-acid polypeptide reads, in one-letter code: Mas-related G-protein coupled receptor member X3 (322 aa).

Residues 1–31 (MDPTIPALGTSQTPINRREETPCYKQTLSLT) lie on the Extracellular side of the membrane. Residues 32–52 (VLTCIISLVGLTGNAVVLWLL) traverse the membrane as a helical segment. Over 53-60 (GFRMRRNA) the chain is Cytoplasmic. The helical transmembrane segment at 61-81 (VSTYILNLAAVDFLFLSGHIV) threads the bilayer. The Extracellular segment spans residues 82-96 (RSPLRLISIRHPISK). Residues 97–117 (IVNPVMTFPYFIGLSMLSAIS) form a helical membrane-spanning segment. Residues 118–139 (TERCLSVLWPMWYRCRRPRHLS) lie on the Cytoplasmic side of the membrane. Residues 140–160 (VVVCVLLWALSLLRSILEWMF) traverse the membrane as a helical segment. Residues 161–177 (CDFLFSGADSVWCETSD) are Extracellular-facing. Residues 178 to 198 (FITIAWLIFLCVVLCGSSLVL) form a helical membrane-spanning segment. Topologically, residues 199 to 213 (LVRILCGSRKMPLTR) are cytoplasmic. Residues 214 to 234 (LYVTILLTVLVFLLCGLPFGI) form a helical membrane-spanning segment. Residues 235 to 254 (QWALFSRIHLDWKVLFCHVH) lie on the Extracellular side of the membrane. The chain crosses the membrane as a helical span at residues 255 to 275 (LISVFLSSLNSSANPIIYFFV). Residues 276 to 322 (GSFRQRQNRQNLKLVLQRALQDTPEVDEGGGRLPEETLELSVSRLEQ) are Cytoplasmic-facing.

The protein belongs to the G-protein coupled receptor 1 family. Mas subfamily.

It is found in the cell membrane. In terms of biological role, orphan receptor. Probably involved in the function of nociceptive neurons. May regulate nociceptor function and/or development, including the sensation or modulation of pain. Potently activated by enkephalins. In Macaca mulatta (Rhesus macaque), this protein is Mas-related G-protein coupled receptor member X3 (MRGPRX3).